The sequence spans 78 residues: UPF0349 protein Sca_0544 (78 aa).

This sequence belongs to the UPF0349 family.

The polypeptide is UPF0349 protein Sca_0544 (Staphylococcus carnosus (strain TM300)).